We begin with the raw amino-acid sequence, 585 residues long: Proline--tRNA ligase (585 aa).

It belongs to the class-II aminoacyl-tRNA synthetase family. ProS type 1 subfamily. In terms of assembly, homodimer.

Its subcellular location is the cytoplasm. It catalyses the reaction tRNA(Pro) + L-proline + ATP = L-prolyl-tRNA(Pro) + AMP + diphosphate. Catalyzes the attachment of proline to tRNA(Pro) in a two-step reaction: proline is first activated by ATP to form Pro-AMP and then transferred to the acceptor end of tRNA(Pro). As ProRS can inadvertently accommodate and process non-cognate amino acids such as alanine and cysteine, to avoid such errors it has two additional distinct editing activities against alanine. One activity is designated as 'pretransfer' editing and involves the tRNA(Pro)-independent hydrolysis of activated Ala-AMP. The other activity is designated 'posttransfer' editing and involves deacylation of mischarged Ala-tRNA(Pro). The misacylated Cys-tRNA(Pro) is not edited by ProRS. This Mycolicibacterium vanbaalenii (strain DSM 7251 / JCM 13017 / BCRC 16820 / KCTC 9966 / NRRL B-24157 / PYR-1) (Mycobacterium vanbaalenii) protein is Proline--tRNA ligase.